A 268-amino-acid chain; its full sequence is Probable 1-acyl-sn-glycerol-3-phosphate acyltransferase (268 aa).

The HXXXXD motif motif lies at 92–97; sequence HKSNLD.

The protein belongs to the 1-acyl-sn-glycerol-3-phosphate acyltransferase family.

The enzyme catalyses a 1-acyl-sn-glycero-3-phosphate + an acyl-CoA = a 1,2-diacyl-sn-glycero-3-phosphate + CoA. Its pathway is phospholipid metabolism; CDP-diacylglycerol biosynthesis; CDP-diacylglycerol from sn-glycerol 3-phosphate: step 2/3. In terms of biological role, converts lysophosphatidic acid (LPA) into phosphatidic acid by incorporating acyl moiety at the 2 position. This Mycoplasma genitalium (strain ATCC 33530 / DSM 19775 / NCTC 10195 / G37) (Mycoplasmoides genitalium) protein is Probable 1-acyl-sn-glycerol-3-phosphate acyltransferase (plsC).